The sequence spans 631 residues: Golgin subfamily A member 8R (631 aa).

Residues 1–72 (MAEETQHNKL…REGPTSSATL (72 aa)) are disordered. A compositionally biased stretch (polar residues) spans 38 to 50 (TNGSIPETATSGG). Coiled-coil stretches lie at residues 85–149 (VLDS…NTDL), 209–247 (ELEQ…HIEG), and 303–419 (SEVE…LSLM). Disordered regions lie at residues 422–451 (PGEG…DPES), 502–523 (AKDA…DEGE), and 551–610 (NSAD…QEHP). The span at 507–519 (LGGGHHQAGAQGG) shows a compositional bias: gly residues. Positions 568–577 (AADKHGDLRE) are enriched in basic and acidic residues.

Belongs to the GOLGA8 family.

This Homo sapiens (Human) protein is Golgin subfamily A member 8R.